We begin with the raw amino-acid sequence, 949 residues long: L-fucokinase/L-fucose-1-P guanylyltransferase (949 aa).

The tract at residues aspartate 25–alanine 191 is fucose-1-phosphate guanylyltransferase. The segment at leucine 559–serine 949 is L-fucokinase.

It belongs to the GHMP kinase family. Homotetramer. Mn(2+) is required as a cofactor. Mg(2+) serves as cofactor.

It catalyses the reaction L-fucose + ATP = beta-L-fucose 1-phosphate + ADP + H(+). It carries out the reaction beta-L-fucose 1-phosphate + GTP + H(+) = GDP-beta-L-fucose + diphosphate. Bifunctional enzyme involved in the salvage pathway of GDP-fucose synthesis. Catalyzes two successive reactions, the ATP-dependent phosphorylation of L-fucose to L-fucose 1-phosphate, and its guanylylation to GDP-L-fucose. GDP-fucose is an important fucose donor in the process of fucosylated oligosaccharides formation. The chain is L-fucokinase/L-fucose-1-P guanylyltransferase from Bacteroides fragilis.